The chain runs to 648 residues: RAF proto-oncogene serine/threonine-protein kinase (648 aa).

Ser-29 is modified (phosphoserine; by MAPK1). Residue Ser-43 is modified to Phosphoserine. An RBD domain is found at 56–131; it reads NTIRVFLPNK…IGEELQVDFL (76 aa). The Phorbol-ester/DAG-type zinc finger occupies 138–184; the sequence is THNFARKTFLKLAFCDICQKFLLNGFRCQTCGYKFHEHCSTKVPTMC. Zn(2+) contacts are provided by His-139, Cys-152, Cys-155, Cys-165, Cys-168, His-173, Cys-176, and Cys-184. The tract at residues 217–335 is disordered; that stretch reads MRESVSRMPA…EKNKIRPRGQ (119 aa). Ser-233 carries the phosphoserine; by PKA modification. Residues 239–271 show a composition bias toward polar residues; that stretch reads TFNTSSPSSEGSLSQRQRSTSTPNVHMVSTTLP. Ser-252 and Ser-259 each carry phosphoserine. At Thr-268 the chain carries Phosphothreonine; by autocatalysis. At Thr-269 the chain carries Phosphothreonine; by PKA. Basic and acidic residues predominate over residues 275–285; the sequence is RMIEDAIRSHS. The span at 286–301 shows a compositional bias: low complexity; that stretch reads ESASPSALSSSPNNLS. Residues Ser-289, Ser-296, and Ser-301 each carry the phosphoserine; by MAPK1 modification. An interaction with PEBP1/RKIP region spans residues 331–349; that stretch reads RPRGQRDSSYYWEIEASEV. The residue at position 338 (Ser-338) is a Phosphoserine; by PAK1, PAK2, PAK3 and PAK5. Ser-339 carries the phosphoserine; by PAK1, PAK2 and PAK3 modification. 2 positions are modified to phosphotyrosine; by SRC: Tyr-340 and Tyr-341. Residues 349 to 609 enclose the Protein kinase domain; the sequence is VMLSTRIGSG…PQILSSIELL (261 aa). ATP contacts are provided by residues 355 to 363 and Lys-375; that span reads IGSGSFGTV. Asp-468 (proton acceptor) is an active-site residue. Phosphoserine is present on Ser-471. Thr-491 is modified (phosphothreonine). Phosphoserine is present on Ser-494. A phosphoserine; by PKC mark is found at Ser-497 and Ser-499. Arg-563 bears the Symmetric dimethylarginine; by PRMT5 mark. Ser-621 is modified (phosphoserine). Ser-642 bears the Phosphoserine; by MAPK1 mark.

The protein belongs to the protein kinase superfamily. TKL Ser/Thr protein kinase family. RAF subfamily. As to quaternary structure, monomer. Homodimer. Heterodimerizes with BRAF and this heterodimer possesses a highly increased kinase activity compared to the respective homodimers or monomers. Heterodimerization is mitogen-regulated and enhanced by 14-3-3 proteins. MAPK1/ERK2 activation can induce a negative feedback that promotes the dissociation of the heterodimer. Forms a multiprotein complex with Ras (M-Ras/MRAS), SHOC2 and protein phosphatase 1 (PPP1CA, PPP1CB and PPP1CC). Interacts with LZTR1. Interacts with Ras proteins; the interaction is antagonized by RIN1. Weakly interacts with RIT1. Interacts with STK3/MST2; the interaction inhibits its pro-apoptotic activity. Interacts (when phosphorylated at Ser-259) with YWHAZ (unphosphorylated at 'Thr-232'). Interacts with MAP3K5/ASF1 (via N-terminus) and this interaction inhibits the proapoptotic function of MAP3K5/ASK1. Interacts with PAK1 (via kinase domain). The phosphorylated form interacts with PIN1. The Ser-338 and Ser-339 phosphorylated form (by PAK1) interacts with BCL2. Interacts with PEBP1/RKIP and this interaction is enhanced if RAF1 is phosphorylated on residues Ser-338, Ser-339, Tyr-340 and Tyr-341. Interacts with ADCY2, ADCY5, ADCY6, DGKH, RCAN1/DSCR1, PPP1R12A, PKB/AKT1, PPP2CA, PPP2R1B, SPRY2, SPRY4, CNKSR1/CNK1, KSR2 and PHB/prohibitin. Interacts with ROCK2. Interacts (via N-terminus) with RGS14 (via RBD domains); the interaction mediates the formation of a ternary complex with BRAF, a ternary complex inhibited by GNAI1. Probably forms a complex composed of chaperones HSP90 and HSP70, co-chaperones CDC37, PPP5C, TSC1 and client protein TSC2, CDK4, AKT, RAF1 and NR3C1; this complex does not contain co-chaperones STIP1/HOP and PTGES3/p23. Interacts with MAP2K1/MEK1 and MAP2K2/MEK2. In its active form, interacts with PRMT5. Interacts with FAM83B; displaces 14-3-3 proteins from RAF1 and activates RAF1. Interacts with PDE8A; the interaction promotes RAF1 activity. Interacts with MFHAS1. Interacts with GLS. Interacts with YWHAZ. Interacts with NEK10 and MAP2K1; the interaction is direct with NEK10 and required for ERK1/2-signaling pathway activation in response to UV irradiation. Zn(2+) serves as cofactor. Post-translationally, phosphorylation at Thr-269, Ser-338, Tyr-341, Thr-491 and Ser-494 results in its activation. Phosphorylation at Ser-29, Ser-43, Ser-289, Ser-296, Ser-301 and Ser-642 by MAPK1/ERK2 results in its inactivation. Phosphorylation at Ser-259 induces the interaction with YWHAZ and inactivates kinase activity. Dephosphorylation of Ser-259 by the SHOC2-MRAS-PP1c (SMP) complex consisting of SHOC2, GTP-bound M-Ras/MRAS and the catalytic subunit of protein phosphatase 1 (PPP1CA, PPP1CB or PPP1CC); this relieves inactivation and stimulates kinase activity. Phosphorylation at Ser-338 by PAK1 and PAK5 and Ser-339 by PAK1 is required for its mitochondrial localization. Phosphorylation at Ser-621 in response to growth factor treatment stabilizes the protein, possibly by preventing proteasomal degradation. Phosphorylation at Ser-289, Ser-296, Ser-301, Ser-338 and Ser-621 are somehow linked to the methylation potential of cells. Treatment of cells with HGF in the presence of the methylation inhibitor 5'-methylthioadenosine (MTA) results in increased phosphorylation at Ser-338 and Ser-621 and decreased phosphorylation at Ser-296, Ser-301 and Ser-338. Dephosphorylation at Ser-338 by PPP5C results in a decreased of activity. In terms of processing, methylated in response to EGF treatment. This modification leads to destabilization of the protein, possibly through proteasomal degradation.

Its subcellular location is the cytoplasm. The protein resides in the cell membrane. The protein localises to the mitochondrion. It localises to the nucleus. It catalyses the reaction L-seryl-[protein] + ATP = O-phospho-L-seryl-[protein] + ADP + H(+). It carries out the reaction L-threonyl-[protein] + ATP = O-phospho-L-threonyl-[protein] + ADP + H(+). Regulation is a highly complex process involving membrane recruitment, protein-protein interactions, dimerization, and phosphorylation/dephosphorylation events. Ras-GTP recruits RAF1 to the membrane, thereby promoting its activation. The inactive conformation of RAF1 is maintained by autoinhibitory interactions occurring between the N-terminal regulatory and the C-terminal catalytic domains and by the binding of a 14-3-3 protein that contacts two phosphorylation sites, Ser-259 and Ser-621. Upon mitogenic stimulation, Ras and PPP2R1A cooperate to release autoinhibition and the subsequent phosphorylation of activating sites: Ser-338, Tyr-341, Thr-491, and Ser-494, yields a fully active kinase. Through a negative feedback mechanism involving MAPK1/ERK2, RAF1 is phosphorylated on Ser-29, Ser-43, Ser-289, Ser-296, Ser-301 and Ser-642 by MAPK1/ERK2, which yields an inactive, desensitized kinase. The signaling-competent conformation of RAF1 is finally re-established by the coordinated action of PIN1, a prolyl isomerase that converts pSer and pThr residues from the cis to the trans conformation, which is preferentially recognized and dephosphorylated by PPP2R1A. Activated by homodimerization and heterodimerization (with BRAF). Also regulated through association with other proteins such as KSR2, CNKSR1/CNK1, PEBP1/RKIP, PHB/prohibitin and SPRY4. PEBP1/RKIP acts by dissociating RAF1 from its substrates MAP2K1/MEK1 and MAP2K2/MEK2. PHB/prohibitin facilitates the displacement of 14-3-3 from RAF1 by activated Ras, thereby promoting cell membrane localization and phosphorylation of RAF1 at the activating Ser-338. SPRY4 inhibits Ras-independent, but not Ras-dependent, activation of RAF1. CNKSR1/CNK1 regulates Src-mediated RAF1 activation. In terms of biological role, serine/threonine-protein kinase that acts as a regulatory link between the membrane-associated Ras GTPases and the MAPK/ERK cascade, and this critical regulatory link functions as a switch determining cell fate decisions including proliferation, differentiation, apoptosis, survival and oncogenic transformation. RAF1 activation initiates a mitogen-activated protein kinase (MAPK) cascade that comprises a sequential phosphorylation of the dual-specific MAPK kinases (MAP2K1/MEK1 and MAP2K2/MEK2) and the extracellular signal-regulated kinases (MAPK3/ERK1 and MAPK1/ERK2). The phosphorylated form of RAF1 (on residues Ser-338 and Ser-339, by PAK1) phosphorylates BAD/Bcl2-antagonist of cell death at 'Ser-75'. Phosphorylates adenylyl cyclases: ADCY2, ADCY5 and ADCY6, resulting in their activation. Phosphorylates PPP1R12A resulting in inhibition of the phosphatase activity. Can promote NF-kB activation and inhibit signal transducers involved in motility (ROCK2), apoptosis (MAP3K5/ASK1 and STK3/MST2), proliferation and angiogenesis (RB1). Can protect cells from apoptosis also by translocating to the mitochondria where it binds BCL2 and displaces BAD/Bcl2-antagonist of cell death. Regulates Rho signaling and migration, and is required for normal wound healing. Plays a role in the oncogenic transformation of epithelial cells via repression of the TJ protein, occludin (OCLN) by inducing the up-regulation of a transcriptional repressor SNAI2/SLUG, which induces down-regulation of OCLN. Restricts caspase activation in response to selected stimuli, notably Fas stimulation, pathogen-mediated macrophage apoptosis, and erythroid differentiation. Phosphorylates TNNT2/cardiac muscle troponin T. The chain is RAF proto-oncogene serine/threonine-protein kinase (Raf1) from Rattus norvegicus (Rat).